We begin with the raw amino-acid sequence, 493 residues long: Cytochrome c-552 (493 aa).

An N-terminal signal peptide occupies residues 1-25 (MEKKLKSWQGWLLSGGSMVVVFVLG). Position 116 (histidine 116) interacts with heme c. Heme-binding residues include cysteine 144, cysteine 147, and lysine 148. Heme c contacts are provided by cysteine 182, cysteine 185, histidine 186, cysteine 224, cysteine 227, and histidine 228. Glutamate 230, tyrosine 231, lysine 276, and glutamine 278 together coordinate Ca(2+). Residue tyrosine 231 participates in substrate binding. Histidine 279 lines the substrate pocket. Positions 290, 297, 300, 301, 315, 328, 331, 332, and 407 each coordinate heme c.

It belongs to the cytochrome c-552 family. Ca(2+) is required as a cofactor. The cofactor is heme c.

It is found in the periplasm. It catalyses the reaction 6 Fe(III)-[cytochrome c] + NH4(+) + 2 H2O = 6 Fe(II)-[cytochrome c] + nitrite + 8 H(+). It functions in the pathway nitrogen metabolism; nitrate reduction (assimilation). In terms of biological role, catalyzes the reduction of nitrite to ammonia, consuming six electrons in the process. This chain is Cytochrome c-552, found in Bacteroides thetaiotaomicron (strain ATCC 29148 / DSM 2079 / JCM 5827 / CCUG 10774 / NCTC 10582 / VPI-5482 / E50).